Consider the following 153-residue polypeptide: Ribonuclease H (153 aa).

The 142-residue stretch at 1–142 folds into the RNase H type-1 domain; the sequence is MLKTIKIFSD…CDHLARESAK (142 aa). Aspartate 10, glutamate 48, aspartate 70, and aspartate 134 together coordinate Mg(2+).

Belongs to the RNase H family. In terms of assembly, monomer. Requires Mg(2+) as cofactor.

It localises to the cytoplasm. It carries out the reaction Endonucleolytic cleavage to 5'-phosphomonoester.. In terms of biological role, endonuclease that specifically degrades the RNA of RNA-DNA hybrids. The sequence is that of Ribonuclease H from Buchnera aphidicola subsp. Baizongia pistaciae (strain Bp).